Consider the following 562-residue polypeptide: 3-(3-hydroxy-phenyl)propionate/3-hydroxycinnamic acid hydroxylase (562 aa).

FAD-binding positions include 8-37 (DVVIVGAGPVGLTLANILGGQGVRTLIIEE) and 275-285 (FRKGRMLLAGD).

It belongs to the PheA/TfdB FAD monooxygenase family. FAD is required as a cofactor.

It carries out the reaction 3-(3-hydroxyphenyl)propanoate + NADH + O2 + H(+) = 3-(2,3-dihydroxyphenyl)propanoate + NAD(+) + H2O. It catalyses the reaction (2E)-3-(3-hydroxyphenyl)prop-2-enoate + NADH + O2 + H(+) = (2E)-3-(2,3-dihydroxyphenyl)prop-2-enoate + NAD(+) + H2O. Its pathway is aromatic compound metabolism; 3-phenylpropanoate degradation. In terms of biological role, catalyzes the insertion of one atom of molecular oxygen into position 2 of the phenyl ring of 3-(3-hydroxyphenyl)propionate (3-HPP) and hydroxycinnamic acid (3HCI). This Mycolicibacterium smegmatis (strain ATCC 700084 / mc(2)155) (Mycobacterium smegmatis) protein is 3-(3-hydroxy-phenyl)propionate/3-hydroxycinnamic acid hydroxylase.